A 485-amino-acid polypeptide reads, in one-letter code: N-succinylglutamate 5-semialdehyde dehydrogenase (485 aa).

220-225 (GSANTG) is a binding site for NAD(+). Residues Glu243 and Cys278 contribute to the active site.

It belongs to the aldehyde dehydrogenase family. AstD subfamily.

It catalyses the reaction N-succinyl-L-glutamate 5-semialdehyde + NAD(+) + H2O = N-succinyl-L-glutamate + NADH + 2 H(+). It functions in the pathway amino-acid degradation; L-arginine degradation via AST pathway; L-glutamate and succinate from L-arginine: step 4/5. In terms of biological role, catalyzes the NAD-dependent reduction of succinylglutamate semialdehyde into succinylglutamate. This is N-succinylglutamate 5-semialdehyde dehydrogenase from Vibrio cholerae serotype O1 (strain M66-2).